A 534-amino-acid chain; its full sequence is Nuclear polyadenylated RNA-binding protein 4 (534 aa).

The segment at 1 to 154 (MSSDEEDFND…TKEERSKADL (154 aa)) is disordered. Ser-2 and Ser-3 each carry phosphoserine. Positions 13–30 (GDDKPTTTEEVKKEEEQN) are enriched in basic and acidic residues. A compositionally biased stretch (low complexity) spans 37–78 (SQLDQLAALQALSSSLNKLNNPNSNNSSSNNSNQDTSSSKQD). Phosphoserine is present on residues Ser-51 and Ser-87. A compositionally biased stretch (basic and acidic residues) spans 81–98 (ANDKEGSNEDTKNEKKQE). Composition is skewed to low complexity over residues 99–112 (SATS…ASSA) and 121–144 (QLQQ…QVTQ). Residues 145–154 (TKEERSKADL) are compositionally biased toward basic and acidic residues. 2 consecutive RRM domains span residues 159-241 (CKMF…EQDK) and 243-320 (GKIF…RAEP). Ser-206 carries the post-translational modification Phosphoserine. 2 disordered regions span residues 316-354 (KRAE…DFNQ) and 415-534 (MPPN…PYNR). Positions 336–354 (GNNMNRRGGNFGNQGDFNQ) are enriched in low complexity. Residues 420-459 (MTLNQPQQDSNATQGSPAPSDSDNNKSNDVQTIGNTSNTD) show a composition bias toward polar residues. Position 458 is a phosphothreonine (Thr-458). Ser-460 and Ser-462 each carry phosphoserine. A compositionally biased stretch (low complexity) spans 460–475 (SGSPPLNLPNGPKGPS). Residues 478 to 505 (NDDHNSGYGYNRDRGDRDRNDRDRDYNH) are compositionally biased toward basic and acidic residues. Arg-519 carries the post-translational modification Omega-N-methylarginine. A compositionally biased stretch (low complexity) spans 523-534 (NRRNNGYHPYNR).

As to quaternary structure, interacts with NAM7. Methylated by HMT1. The methylation is required for nuclear export.

It localises to the cytoplasm. It is found in the nucleus. The protein localises to the stress granule. In terms of biological role, RNA-binding protein, which is involved in the polyadenylation-dependent pre-mRNA 3'-end formation and cooperates with the cleavage factor CFIA complex and the cleavage and polyadenylation factor (CPF) complex. May be involved in regulation of poly(A) site selection. Is involved in nonsense-mediated mRNA decay. Seems to bind to an RNA downstream sequence element (DSE) located 3' of a nonsense codon and may mark the transcript for decay. The protein is Nuclear polyadenylated RNA-binding protein 4 of Saccharomyces cerevisiae (strain ATCC 204508 / S288c) (Baker's yeast).